The following is a 305-amino-acid chain: Oxygen-dependent coproporphyrinogen-III oxidase (305 aa).

A substrate-binding site is contributed by Ser97. The a divalent metal cation site is built by His101 and His111. The Proton donor role is filled by His111. 113 to 115 is a substrate binding site; that stretch reads NVR. A divalent metal cation-binding residues include His150 and His180. Residues 245–280 are important for dimerization; sequence YVEFNLVWDRGTHFGLQSGGRTESILLSMPPLASWA. Residue 263–265 coordinates substrate; that stretch reads GGR.

Belongs to the aerobic coproporphyrinogen-III oxidase family. In terms of assembly, homodimer. A divalent metal cation is required as a cofactor.

The protein resides in the cytoplasm. The catalysed reaction is coproporphyrinogen III + O2 + 2 H(+) = protoporphyrinogen IX + 2 CO2 + 2 H2O. It functions in the pathway porphyrin-containing compound metabolism; protoporphyrin-IX biosynthesis; protoporphyrinogen-IX from coproporphyrinogen-III (O2 route): step 1/1. In terms of biological role, involved in the heme biosynthesis. Catalyzes the aerobic oxidative decarboxylation of propionate groups of rings A and B of coproporphyrinogen-III to yield the vinyl groups in protoporphyrinogen-IX. The sequence is that of Oxygen-dependent coproporphyrinogen-III oxidase from Variovorax paradoxus (strain S110).